A 208-amino-acid chain; its full sequence is Probable GTP-binding protein EngB (208 aa).

Residues 25 to 199 enclose the EngB-type G domain; sequence TGIEVAFAGR…RQKLDSWYNG (175 aa). Residues 33–40, 60–64, 78–81, 145–148, and 178–180 each bind GTP; these read GRSNAGKS, GRTQL, DLPG, TKSD, and FSS. Positions 40 and 62 each coordinate Mg(2+).

This sequence belongs to the TRAFAC class TrmE-Era-EngA-EngB-Septin-like GTPase superfamily. EngB GTPase family. Mg(2+) is required as a cofactor.

In terms of biological role, necessary for normal cell division and for the maintenance of normal septation. This Enterobacter sp. (strain 638) protein is Probable GTP-binding protein EngB.